A 218-amino-acid polypeptide reads, in one-letter code: Octanoyltransferase (218 aa).

The 184-residue stretch at 30–213 (GEIEDTLILV…YFSEVFNYDI (184 aa)) folds into the BPL/LPL catalytic domain. Substrate-binding positions include 75–82 (RGGDVTYH), 143–145 (AIG), and 156–158 (GFA). The active-site Acyl-thioester intermediate is C174.

Belongs to the LipB family.

The protein localises to the cytoplasm. It carries out the reaction octanoyl-[ACP] + L-lysyl-[protein] = N(6)-octanoyl-L-lysyl-[protein] + holo-[ACP] + H(+). It participates in protein modification; protein lipoylation via endogenous pathway; protein N(6)-(lipoyl)lysine from octanoyl-[acyl-carrier-protein]: step 1/2. Functionally, catalyzes the transfer of endogenously produced octanoic acid from octanoyl-acyl-carrier-protein onto the lipoyl domains of lipoate-dependent enzymes. Lipoyl-ACP can also act as a substrate although octanoyl-ACP is likely to be the physiological substrate. The sequence is that of Octanoyltransferase from Alkaliphilus metalliredigens (strain QYMF).